The primary structure comprises 583 residues: 2-succinyl-5-enolpyruvyl-6-hydroxy-3-cyclohexene-1-carboxylate synthase (583 aa).

This sequence belongs to the TPP enzyme family. MenD subfamily. In terms of assembly, homodimer. The cofactor is Mg(2+). Requires Mn(2+) as cofactor. It depends on thiamine diphosphate as a cofactor.

It catalyses the reaction isochorismate + 2-oxoglutarate + H(+) = 5-enolpyruvoyl-6-hydroxy-2-succinyl-cyclohex-3-ene-1-carboxylate + CO2. It participates in quinol/quinone metabolism; 1,4-dihydroxy-2-naphthoate biosynthesis; 1,4-dihydroxy-2-naphthoate from chorismate: step 2/7. It functions in the pathway cofactor biosynthesis; phylloquinone biosynthesis. Functionally, catalyzes the thiamine diphosphate-dependent decarboxylation of 2-oxoglutarate and the subsequent addition of the resulting succinic semialdehyde-thiamine pyrophosphate anion to isochorismate to yield 2-succinyl-5-enolpyruvyl-6-hydroxy-3-cyclohexene-1-carboxylate (SEPHCHC). This Nostoc sp. (strain PCC 7120 / SAG 25.82 / UTEX 2576) protein is 2-succinyl-5-enolpyruvyl-6-hydroxy-3-cyclohexene-1-carboxylate synthase.